The chain runs to 97 residues: Co-chaperonin GroES (97 aa).

It belongs to the GroES chaperonin family. Heptamer of 7 subunits arranged in a ring. Interacts with the chaperonin GroEL.

Its subcellular location is the cytoplasm. Its function is as follows. Together with the chaperonin GroEL, plays an essential role in assisting protein folding. The GroEL-GroES system forms a nano-cage that allows encapsulation of the non-native substrate proteins and provides a physical environment optimized to promote and accelerate protein folding. GroES binds to the apical surface of the GroEL ring, thereby capping the opening of the GroEL channel. In Pseudomonas putida (strain GB-1), this protein is Co-chaperonin GroES.